Reading from the N-terminus, the 296-residue chain is MTDTPFHCGFVAIVGRPNVGKSTLMNHLIGQKISITSKKSQTTRHRVTGIHTEDAAQFVFVDTPGFQTYHKGALNEALNKSVKDSLGSVDCVLFLLEAMRFTAADREVMALLPKKTPVILVVNKLDKAKDKLTLQAFIDEVTAEFEFAGVEVVSAKHGQRLAELLDQVRPHLPESMPLYPEDMITDKNERFLAAEIVREKLFRYLGEELPYEMNVEVEMFEMDGALRRIHIAVLVDKEHQKPIVIGRGGEKLKKISTEARLDMEKLFDGKVFLQVWVKVKSGWADDVRFLREFGLD.

Residues 7–174 form the Era-type G domain; the sequence is HCGFVAIVGR…LDQVRPHLPE (168 aa). Positions 15–22 are G1; the sequence is GRPNVGKS. 15-22 contacts GTP; it reads GRPNVGKS. The G2 stretch occupies residues 41–45; sequence QTTRH. The G3 stretch occupies residues 62 to 65; it reads DTPG. Residues 62 to 66 and 123 to 126 contribute to the GTP site; these read DTPGF and NKLD. Positions 123–126 are G4; the sequence is NKLD. The interval 153-155 is G5; that stretch reads VSA. The 77-residue stretch at 205 to 281 folds into the KH type-2 domain; the sequence is LGEELPYEMN…FLQVWVKVKS (77 aa).

This sequence belongs to the TRAFAC class TrmE-Era-EngA-EngB-Septin-like GTPase superfamily. Era GTPase family. As to quaternary structure, monomer.

It localises to the cytoplasm. It is found in the cell inner membrane. Functionally, an essential GTPase that binds both GDP and GTP, with rapid nucleotide exchange. Plays a role in 16S rRNA processing and 30S ribosomal subunit biogenesis and possibly also in cell cycle regulation and energy metabolism. This is GTPase Era from Chromobacterium violaceum (strain ATCC 12472 / DSM 30191 / JCM 1249 / CCUG 213 / NBRC 12614 / NCIMB 9131 / NCTC 9757 / MK).